The chain runs to 346 residues: MPTAAPRWILHVDLDQFLASVELLRHPELAGLPVIVGGNGDPTEPRKVVTCASYEARAYGVRAGMPLRTAARRCPEATFLPSNPAAYNAASEEVVALLRDLGYPVEVWGWDEAYLAVAPGTPDDPIEVAEEIRKVILSQTGLSCSIGISDNKQRAKIATGLAKPAGIYQLTDANWMAIMGDRTVEALWGVGPKTTKRLAKLGINTVYQLAHTDSGLLMSTFGPRTALWLLLAKGGGDTEVSAQAWVPRSRSHAVTFPRDLTCRSEMESAVTELAQRTLNEVVASSRTVTRVAVTVRTATFYTRTKIRKLQAPSTDPDVITAAARHVLDLFELDRPVRLLGVRLELA.

One can recognise a UmuC domain in the interval 9 to 191; it reads ILHVDLDQFL…RTVEALWGVG (183 aa). Residues aspartate 13 and aspartate 111 each coordinate Mg(2+). Glutamate 112 is a catalytic residue.

This sequence belongs to the DNA polymerase type-Y family. Monomer. The cofactor is Mg(2+).

It is found in the cytoplasm. It carries out the reaction DNA(n) + a 2'-deoxyribonucleoside 5'-triphosphate = DNA(n+1) + diphosphate. Functionally, poorly processive, error-prone DNA polymerase involved in untargeted mutagenesis. Copies undamaged DNA at stalled replication forks, which arise in vivo from mismatched or misaligned primer ends. These misaligned primers can be extended by PolIV. Exhibits no 3'-5' exonuclease (proofreading) activity. May be involved in translesional synthesis, in conjunction with the beta clamp from PolIII. The sequence is that of DNA polymerase IV 2 (dinB2) from Mycobacterium bovis (strain ATCC BAA-935 / AF2122/97).